The chain runs to 62 residues: Toxin Tb2 (62 aa).

Residues 1 to 62 (KEGYAMDHEG…KVWDYATNKC (62 aa)) form the LCN-type CS-alpha/beta domain. 4 cysteine pairs are disulfide-bonded: Cys11/Cys62, Cys15/Cys38, Cys23/Cys43, and Cys27/Cys45. Cys62 bears the Cysteine amide mark.

This sequence belongs to the long (4 C-C) scorpion toxin superfamily. Sodium channel inhibitor family. Beta subfamily. As to expression, expressed by the venom gland.

It localises to the secreted. Functionally, beta toxins bind voltage-independently at site-4 of sodium channels (Nav) and shift the voltage of activation toward more negative potentials thereby affecting sodium channel activation and promoting spontaneous and repetitive firing. This toxin is active on mammals. The protein is Toxin Tb2 of Tityus bahiensis (Brazilian scorpion).